The chain runs to 297 residues: Mycothiol acetyltransferase (297 aa).

N-acetyltransferase domains lie at 8–153 (DALD…PPLP) and 156–297 (VALR…QYAL). Residue Glu36 coordinates 1D-myo-inositol 2-(L-cysteinylamino)-2-deoxy-alpha-D-glucopyranoside. 80–82 (LAV) contributes to the acetyl-CoA binding site. Positions 183, 223, and 231 each coordinate 1D-myo-inositol 2-(L-cysteinylamino)-2-deoxy-alpha-D-glucopyranoside. Residues 235–237 (VGV) and 242–248 (QGGGLGK) contribute to the acetyl-CoA site. Tyr269 lines the 1D-myo-inositol 2-(L-cysteinylamino)-2-deoxy-alpha-D-glucopyranoside pocket. 274–279 (NSPAVR) is a binding site for acetyl-CoA.

This sequence belongs to the acetyltransferase family. MshD subfamily. As to quaternary structure, monomer.

The enzyme catalyses 1D-myo-inositol 2-(L-cysteinylamino)-2-deoxy-alpha-D-glucopyranoside + acetyl-CoA = mycothiol + CoA + H(+). Catalyzes the transfer of acetyl from acetyl-CoA to desacetylmycothiol (Cys-GlcN-Ins) to form mycothiol. This is Mycothiol acetyltransferase from Actinosynnema mirum (strain ATCC 29888 / DSM 43827 / JCM 3225 / NBRC 14064 / NCIMB 13271 / NRRL B-12336 / IMRU 3971 / 101).